Here is a 180-residue protein sequence, read N- to C-terminus: Shikimate kinase (180 aa).

14 to 19 (GAGKST) is a binding site for ATP. Serine 18 contacts Mg(2+). Substrate is bound by residues aspartate 36, arginine 60, and glycine 82. An ATP-binding site is contributed by arginine 120. Arginine 140 provides a ligand contact to substrate. Glutamine 157 serves as a coordination point for ATP.

It belongs to the shikimate kinase family. Monomer. Mg(2+) serves as cofactor.

The protein localises to the cytoplasm. The enzyme catalyses shikimate + ATP = 3-phosphoshikimate + ADP + H(+). It participates in metabolic intermediate biosynthesis; chorismate biosynthesis; chorismate from D-erythrose 4-phosphate and phosphoenolpyruvate: step 5/7. Catalyzes the specific phosphorylation of the 3-hydroxyl group of shikimic acid using ATP as a cosubstrate. This Haemophilus influenzae (strain PittEE) protein is Shikimate kinase.